Here is a 432-residue protein sequence, read N- to C-terminus: Glutamyl-tRNA reductase (432 aa).

Substrate contacts are provided by residues 49–52 (TCNR), S107, 112–114 (ETQ), and Q118. The active-site Nucleophile is the C50. An NADP(+)-binding site is contributed by 186–191 (GAGEMG).

The protein belongs to the glutamyl-tRNA reductase family. As to quaternary structure, homodimer.

It catalyses the reaction (S)-4-amino-5-oxopentanoate + tRNA(Glu) + NADP(+) = L-glutamyl-tRNA(Glu) + NADPH + H(+). It functions in the pathway porphyrin-containing compound metabolism; protoporphyrin-IX biosynthesis; 5-aminolevulinate from L-glutamyl-tRNA(Glu): step 1/2. Functionally, catalyzes the NADPH-dependent reduction of glutamyl-tRNA(Glu) to glutamate 1-semialdehyde (GSA). The sequence is that of Glutamyl-tRNA reductase from Campylobacter jejuni (strain RM1221).